The following is a 251-amino-acid chain: Ubiquinone/menaquinone biosynthesis C-methyltransferase UbiE (251 aa).

S-adenosyl-L-methionine-binding positions include threonine 74, aspartate 95, and 123–124; that span reads NA.

It belongs to the class I-like SAM-binding methyltransferase superfamily. MenG/UbiE family.

The enzyme catalyses a 2-demethylmenaquinol + S-adenosyl-L-methionine = a menaquinol + S-adenosyl-L-homocysteine + H(+). The catalysed reaction is a 2-methoxy-6-(all-trans-polyprenyl)benzene-1,4-diol + S-adenosyl-L-methionine = a 5-methoxy-2-methyl-3-(all-trans-polyprenyl)benzene-1,4-diol + S-adenosyl-L-homocysteine + H(+). It participates in quinol/quinone metabolism; menaquinone biosynthesis; menaquinol from 1,4-dihydroxy-2-naphthoate: step 2/2. Its pathway is cofactor biosynthesis; ubiquinone biosynthesis. Methyltransferase required for the conversion of demethylmenaquinol (DMKH2) to menaquinol (MKH2) and the conversion of 2-polyprenyl-6-methoxy-1,4-benzoquinol (DDMQH2) to 2-polyprenyl-3-methyl-6-methoxy-1,4-benzoquinol (DMQH2). The sequence is that of Ubiquinone/menaquinone biosynthesis C-methyltransferase UbiE from Shewanella sediminis (strain HAW-EB3).